The primary structure comprises 631 residues: DNA ligase (631 aa).

Residues 37-41 (DAHYD) and 79-80 (ST) contribute to the NAD(+) site. Lys115 acts as the N6-AMP-lysine intermediate in catalysis. Arg131, Glu160, and Lys272 together coordinate NAD(+). Zn(2+)-binding residues include Cys361, Cys364, Cys377, and Cys382. The 92-residue stretch at 539 to 630 (DVSSPISGKG…SQSSPEQMSL (92 aa)) folds into the BRCT domain.

It belongs to the NAD-dependent DNA ligase family. LigA subfamily. The cofactor is Mg(2+). Mn(2+) serves as cofactor.

The catalysed reaction is NAD(+) + (deoxyribonucleotide)n-3'-hydroxyl + 5'-phospho-(deoxyribonucleotide)m = (deoxyribonucleotide)n+m + AMP + beta-nicotinamide D-nucleotide.. DNA ligase that catalyzes the formation of phosphodiester linkages between 5'-phosphoryl and 3'-hydroxyl groups in double-stranded DNA using NAD as a coenzyme and as the energy source for the reaction. It is essential for DNA replication and repair of damaged DNA. The sequence is that of DNA ligase from Desulfatibacillum aliphaticivorans.